Reading from the N-terminus, the 74-residue chain is Heat shock factor-binding protein 1-like protein 1 (74 aa).

Residues 12–65 (RALRDAAENLFQELQEHFQALTATLNLRMEEMGNRIEDLQKNVKDLMVQAGIEN) are a coiled coil.

This sequence belongs to the HSBP1 family.

The sequence is that of Heat shock factor-binding protein 1-like protein 1 (HSBP1L1) from Homo sapiens (Human).